We begin with the raw amino-acid sequence, 323 residues long: Serine/threonine-protein phosphatase PP1-gamma catalytic subunit (323 aa).

A2 bears the N-acetylalanine mark. The Mn(2+) site is built by D64, H66, D92, and N124. The active-site Proton donor is H125. Mn(2+)-binding residues include H173 and H248. 2 positions are modified to phosphothreonine: T307 and T311.

The protein belongs to the PPP phosphatase family. PP-1 subfamily. As to quaternary structure, PP1 comprises a catalytic subunit, PPP1CA, PPP1CB or PPP1CC, which is folded into its native form by inhibitor 2 and glycogen synthetase kinase 3, and then complexed to one or several targeting or regulatory subunits. PPP1R12A, PPP1R12B and PPP1R12C mediate binding to myosin. PPP1R3A (in skeletal muscle), PPP1R3B (in liver), PPP1R3C, PPP1R3D and PPP1R3F (in brain) mediate binding to glycogen. PPP1R15A and PPP1R15B mediate binding to EIF2S1. Part of a complex containing PPP1R15B, PP1 and NCK1/2. Interacts with PPP1R3B, PPP1R7 and CDCA2. Interacts with IKFZ1; the interaction targets PPP1CC to pericentromeric heterochromatin, dephosphorylates IKAROS, stabilizes it and prevents it from degradation. Interacts with NOM1 and PPP1R8. Component of the PTW/PP1 phosphatase complex, composed of PPP1R10/PNUTS, TOX4, WDR82, and PPP1CA or PPP1CB or PPP1CC. Interacts with PPP1R8. Interacts with NEK2. Interacts with PPP1R42; the interaction is direct. Interacts with URI1; the interaction is phosphorylation-dependent and occurs in a growth factor-dependent manner. Interacts with FOXP3. Interacts with TMEM225 (via RVxF motif). Interacts with MKI67. Interacts with RRP1B; this targets PPP1CC to the nucleolus. Interacts with DYNLT4. Interacts (via RVxF motif) with FIRRM; regulates PLK1 kinase activity. Interacts with the KNL1 complex subunit KNL1; the interaction is direct and mutually exclusive with KNL1 binding to microtubules. Component of the SHOC2-MRAS-PP1c (SMP) complex consisting of SHOC2, GTP-bound M-Ras/MRAS and the catalytic subunit of protein phosphatase 1 (either PPP1CA, PPP1CB or PPP1CC). SHOC2 and PP1c preferably bind M-Ras/MRAS, but they also bind K-Ras/KRAS, N-Ras/NRAS and H-Ras/HRAS; these interactions are GTP-dependent and both SHOC2 and PP1c are required to form a stable complex. Interacts with SHOC2 in the absence of Ras GTPases. Requires Mn(2+) as cofactor. In terms of processing, phosphorylated by NEK2.

It is found in the cytoplasm. Its subcellular location is the nucleus. The protein resides in the cleavage furrow. The protein localises to the nucleolus. It localises to the nucleoplasm. It is found in the chromosome. Its subcellular location is the centromere. The protein resides in the kinetochore. The protein localises to the nucleus speckle. It localises to the midbody. It is found in the mitochondrion. Its subcellular location is the cytoskeleton. The protein resides in the microtubule organizing center. The enzyme catalyses O-phospho-L-seryl-[protein] + H2O = L-seryl-[protein] + phosphate. The catalysed reaction is O-phospho-L-threonyl-[protein] + H2O = L-threonyl-[protein] + phosphate. Its activity is regulated as follows. Inactivated by binding to URI1. Functionally, protein phosphatase that associates with over 200 regulatory proteins to form highly specific holoenzymes which dephosphorylate hundreds of biological targets. Protein phosphatase 1 (PP1) is essential for cell division, and participates in the regulation of glycogen metabolism, muscle contractility and protein synthesis. Dephosphorylates RPS6KB1. Involved in regulation of ionic conductances and long-term synaptic plasticity. May play an important role in dephosphorylating substrates such as the postsynaptic density-associated Ca(2+)/calmodulin dependent protein kinase II. Component of the PTW/PP1 phosphatase complex, which plays a role in the control of chromatin structure and cell cycle progression during the transition from mitosis into interphase. Regulates the recruitment of the SKA complex to kinetochores. Core component of the SHOC2-MRAS-PP1c (SMP) holophosphatase complex that regulates the MAPK pathway activation. Dephosphorylates MKI67 at the onset of anaphase. The SMP complex specifically dephosphorylates the inhibitory phosphorylation at 'Ser-259' of RAF1 kinase, 'Ser-365' of BRAF kinase and 'Ser-214' of ARAF kinase, stimulating their kinase activities. The SMP complex enhances the dephosphorylation activity and substrate specificity of PP1c. The protein is Serine/threonine-protein phosphatase PP1-gamma catalytic subunit (PPP1CC) of Canis lupus familiaris (Dog).